The following is a 539-amino-acid chain: Glucose-6-phosphate isomerase (539 aa).

E353 serves as the catalytic Proton donor. Residues H384 and K505 contribute to the active site.

Belongs to the GPI family.

Its subcellular location is the cytoplasm. It catalyses the reaction alpha-D-glucose 6-phosphate = beta-D-fructose 6-phosphate. It functions in the pathway carbohydrate biosynthesis; gluconeogenesis. Its pathway is carbohydrate degradation; glycolysis; D-glyceraldehyde 3-phosphate and glycerone phosphate from D-glucose: step 2/4. Catalyzes the reversible isomerization of glucose-6-phosphate to fructose-6-phosphate. In Ralstonia pickettii (strain 12J), this protein is Glucose-6-phosphate isomerase.